Consider the following 312-residue polypeptide: Terpene synthase 8 (312 aa).

Residues D96–E101 carry the DDxx(x)D/E motif motif. The NDxxSxxxD/E motif signature appears at N224–E232.

The protein belongs to the terpene synthase family.

It carries out the reaction (2E,6E)-farnesyl diphosphate + H2O = discoidol + diphosphate. It participates in sesquiterpene biosynthesis. Terpene synthase; part of the gene cluster that mediates the biosynthesis of the trisnorsesquiterpene discodiene which has a function during later stages of multicellular development, during the transition from fingers to Mexican hats. The terpene synthase tps8 converts its substrate farnesyl diphosphate (FDP) into the bicyclic sesquiterpene alcohol discoidol. The cytochrome P450 monooxygenase cyp521A1 then catalyzes the oxidative degradation of discoidol to form the trisnorsesquiterpene discodiene. The polypeptide is Terpene synthase 8 (Dictyostelium discoideum (Social amoeba)).